The sequence spans 546 residues: MAAKEILFSDIARSKLTEGVNILANAVKVTLGPKGRNVVLERSFGAPVVTKDGVSVAKEIELADKLQNIGAQLVKEVASRTSDAAGDGTTTATVLAQAIVREGQKYVAAGLNPLDLKRGIDKAVASAVEELKKISKPTTTSKEIAQVATISANGEESIGQRIAEAIDRVGKEGVITVEDGKSLADELDVVEGLQFDRGYLSPYFINNPDKQIAEIESPYILLHDKKISNIRDLLPVLEQVAKSGRPLLIIAEDVEGEALATLVVNNIRGILKTVAVKAPGFGDRRKALLEDIAILTGGQVIAEETGLTLEKTTLAELGQAKRIEVGKENTTVIDGAGDAKNIEARVKQIRVQIEEATSDYDREKLQERVAKLAGGVAVIKVGGATEIEVKEKKDRVDDALHATRAAVEEGIVPGGGVALIRVRQAIRELKGANADQDAGIKIVLRALEEPLRQIVTNAGEEASVVVAKVAEGTGNFGYNAQTGEYGDLVESGVLDPTKVTRTALQNAASVAGLLLTTDATVYEAPKDAAPAAAPGGPGAGGPGFDF.

Residues 30 to 33 (TLGP), lysine 51, 87 to 91 (DGTTT), glycine 415, and aspartate 495 each bind ATP.

It belongs to the chaperonin (HSP60) family. Forms a cylinder of 14 subunits composed of two heptameric rings stacked back-to-back. Interacts with the co-chaperonin GroES.

It is found in the cytoplasm. It carries out the reaction ATP + H2O + a folded polypeptide = ADP + phosphate + an unfolded polypeptide.. In terms of biological role, together with its co-chaperonin GroES, plays an essential role in assisting protein folding. The GroEL-GroES system forms a nano-cage that allows encapsulation of the non-native substrate proteins and provides a physical environment optimized to promote and accelerate protein folding. This Burkholderia cenocepacia (strain HI2424) protein is Chaperonin GroEL 2.